The sequence spans 154 residues: Endoribonuclease YbeY (154 aa).

3 residues coordinate Zn(2+): histidine 117, histidine 121, and histidine 127.

This sequence belongs to the endoribonuclease YbeY family. Zn(2+) is required as a cofactor.

The protein resides in the cytoplasm. Functionally, single strand-specific metallo-endoribonuclease involved in late-stage 70S ribosome quality control and in maturation of the 3' terminus of the 16S rRNA. The sequence is that of Endoribonuclease YbeY from Polaromonas sp. (strain JS666 / ATCC BAA-500).